The sequence spans 205 residues: Probable GTP-binding protein EngB (205 aa).

One can recognise an EngB-type G domain in the interval 27–201; sequence TGIEIAFAGR…AAKLDFWFSP (175 aa). GTP contacts are provided by residues 35 to 42, 62 to 66, 80 to 83, 147 to 150, and 180 to 182; these read GRSNAGKS, GRTQL, DLPG, TKAD, and FSA. Mg(2+)-binding residues include serine 42 and threonine 64.

This sequence belongs to the TRAFAC class TrmE-Era-EngA-EngB-Septin-like GTPase superfamily. EngB GTPase family. Requires Mg(2+) as cofactor.

Its function is as follows. Necessary for normal cell division and for the maintenance of normal septation. The sequence is that of Probable GTP-binding protein EngB from Haemophilus influenzae (strain PittEE).